The sequence spans 630 residues: Long-chain-fatty-acid--AMP ligase FadD32 (630 aa).

Residues 187–192 (TSGSTR), serine 342, alanine 346, aspartate 469, and arginine 483 each bind ATP.

Belongs to the ATP-dependent AMP-binding enzyme family. As to quaternary structure, monomer.

The enzyme catalyses a long-chain fatty acid + holo-[ACP] + ATP = a long-chain fatty acyl-[ACP] + AMP + diphosphate. The catalysed reaction is decanoate + ATP + H(+) = decanoyl-AMP + diphosphate. It carries out the reaction dodecanoate + ATP + H(+) = dodecanoyl-AMP + diphosphate. It catalyses the reaction tetradecanoate + ATP + H(+) = tetradecanoyl-AMP + diphosphate. Its pathway is lipid metabolism; mycolic acid biosynthesis. The acyl-AMP ligase activity is inhibited by the alkylphosphate ester of AMP, adenosine 50-dodecylphosphate (AMPC12). Also inhibited by eicosyl-AMP (AMPC20). Functionally, involved in the biosynthesis of mycolic acids. Catalyzes the activation of long-chain fatty acids as acyl-adenylates (acyl-AMP), which are then transferred to the phosphopantetheine arm of the polyketide synthase Pks13 for further chain extension. Can use decanoate (C10), dodecanoate (C12) and tetradecanoate (C14). The chain is Long-chain-fatty-acid--AMP ligase FadD32 from Mycolicibacterium smegmatis (strain ATCC 700084 / mc(2)155) (Mycobacterium smegmatis).